Here is a 222-residue protein sequence, read N- to C-terminus: Leucyl/phenylalanyl-tRNA--protein transferase (222 aa).

Belongs to the L/F-transferase family.

It is found in the cytoplasm. The enzyme catalyses N-terminal L-lysyl-[protein] + L-leucyl-tRNA(Leu) = N-terminal L-leucyl-L-lysyl-[protein] + tRNA(Leu) + H(+). It carries out the reaction N-terminal L-arginyl-[protein] + L-leucyl-tRNA(Leu) = N-terminal L-leucyl-L-arginyl-[protein] + tRNA(Leu) + H(+). It catalyses the reaction L-phenylalanyl-tRNA(Phe) + an N-terminal L-alpha-aminoacyl-[protein] = an N-terminal L-phenylalanyl-L-alpha-aminoacyl-[protein] + tRNA(Phe). Its function is as follows. Functions in the N-end rule pathway of protein degradation where it conjugates Leu, Phe and, less efficiently, Met from aminoacyl-tRNAs to the N-termini of proteins containing an N-terminal arginine or lysine. This Legionella pneumophila (strain Paris) protein is Leucyl/phenylalanyl-tRNA--protein transferase.